Here is a 433-residue protein sequence, read N- to C-terminus: 5-methylthioadenosine/S-adenosylhomocysteine deaminase (433 aa).

Zn(2+)-binding residues include H62 and H64. 3 residues coordinate substrate: E91, R143, and H183. H210 provides a ligand contact to Zn(2+). 2 residues coordinate substrate: E213 and D298. D298 provides a ligand contact to Zn(2+).

Belongs to the metallo-dependent hydrolases superfamily. MTA/SAH deaminase family. Requires Zn(2+) as cofactor.

It carries out the reaction S-adenosyl-L-homocysteine + H2O + H(+) = S-inosyl-L-homocysteine + NH4(+). The catalysed reaction is S-methyl-5'-thioadenosine + H2O + H(+) = S-methyl-5'-thioinosine + NH4(+). Its function is as follows. Catalyzes the deamination of 5-methylthioadenosine and S-adenosyl-L-homocysteine into 5-methylthioinosine and S-inosyl-L-homocysteine, respectively. Is also able to deaminate adenosine. This chain is 5-methylthioadenosine/S-adenosylhomocysteine deaminase, found in Caldanaerobacter subterraneus subsp. tengcongensis (strain DSM 15242 / JCM 11007 / NBRC 100824 / MB4) (Thermoanaerobacter tengcongensis).